The sequence spans 51 residues: MARYRCCRSQSQSRCCRRRQRCHRRRRRCCQTRRRAMRCCRRRYRLRCRRH.

Belongs to the protamine P1 family. As to quaternary structure, cross-linked by interchain disulfide bonds around the DNA-helix. Testis.

The protein resides in the nucleus. It is found in the chromosome. Functionally, protamines substitute for histones in the chromatin of sperm during the haploid phase of spermatogenesis. They compact sperm DNA into a highly condensed, stable and inactive complex. This chain is Sperm protamine P1 (PRM1), found in Pongo pygmaeus (Bornean orangutan).